The sequence spans 75 residues: Large ribosomal subunit protein bL31 (75 aa).

It belongs to the bacterial ribosomal protein bL31 family. Type A subfamily. Part of the 50S ribosomal subunit.

Binds the 23S rRNA. The sequence is that of Large ribosomal subunit protein bL31 from Rhodopseudomonas palustris (strain BisB5).